Here is a 545-residue protein sequence, read N- to C-terminus: Eukaryotic translation initiation factor 3 subunit D-2 (545 aa).

The segment covering 99-113 has biased composition (basic residues); sequence FRGNIRNNPRTRGRT. Residues 99-158 are disordered; sequence FRGNIRNNPRTRGRTGRGGAVTGIGGNQPGVGVNERTKYGKGRDNRRQMGRRFGRNAPTR. Over residues 114–127 the composition is skewed to gly residues; the sequence is GRGGAVTGIGGNQP. A compositionally biased stretch (basic and acidic residues) spans 133 to 145; it reads ERTKYGKGRDNRR. Residues 287–301 are RNA gate; sequence QFDLLTVNETALEPP.

This sequence belongs to the eIF-3 subunit D family. In terms of assembly, component of the eukaryotic translation initiation factor 3 (eIF-3) complex. The eIF-3 complex interacts with pix.

The protein resides in the cytoplasm. Its function is as follows. mRNA cap-binding component of the eukaryotic translation initiation factor 3 (eIF-3) complex, which is involved in protein synthesis of a specialized repertoire of mRNAs and, together with other initiation factors, stimulates binding of mRNA and methionyl-tRNAi to the 40S ribosome. The eIF-3 complex specifically targets and initiates translation of a subset of mRNAs involved in cell proliferation. In the eIF-3 complex, eif3d specifically recognizes and binds the 7-methylguanosine cap of a subset of mRNAs. This is Eukaryotic translation initiation factor 3 subunit D-2 from Drosophila persimilis (Fruit fly).